Here is a 44-residue protein sequence, read N- to C-terminus: Photosystem II reaction center protein J (44 aa).

A helical transmembrane segment spans residues 12 to 32 (IPLWIVGFVVGSLALGLLGIL).

It belongs to the PsbJ family. PSII is composed of 1 copy each of membrane proteins PsbA, PsbB, PsbC, PsbD, PsbE, PsbF, PsbH, PsbI, PsbJ, PsbK, PsbL, PsbM, PsbT, PsbY, PsbZ, Psb30/Ycf12, at least 3 peripheral proteins of the oxygen-evolving complex and a large number of cofactors. It forms dimeric complexes.

Its subcellular location is the plastid. The protein localises to the chloroplast thylakoid membrane. Its function is as follows. One of the components of the core complex of photosystem II (PSII). PSII is a light-driven water:plastoquinone oxidoreductase that uses light energy to abstract electrons from H(2)O, generating O(2) and a proton gradient subsequently used for ATP formation. It consists of a core antenna complex that captures photons, and an electron transfer chain that converts photonic excitation into a charge separation. This Bigelowiella natans (Pedinomonas minutissima) protein is Photosystem II reaction center protein J.